The primary structure comprises 828 residues: Periplasmic nitrate reductase (828 aa).

Positions 1–31 (MKLSRRSFMKANAVAAAAAAAGLSVPGVARA) form a signal peptide, tat-type signal. Residues 39 to 95 (IKWDKAPCRFCGTGCGVLVGTQQGRVVACQGDPDAPVNRGLNCIKGYFLPKIMYGKD) enclose the 4Fe-4S Mo/W bis-MGD-type domain. Positions 46, 49, 53, and 81 each coordinate [4Fe-4S] cluster. Mo-bis(molybdopterin guanine dinucleotide) contacts are provided by residues K83, Q150, N175, C179, 212–219 (WGSNMAEM), 243–247 (STYQH), 262–264 (QSD), M372, Q376, N482, 508–509 (SD), K531, D558, and 718–727 (TGRVLEHWHT). F794 serves as a coordination point for substrate. The Mo-bis(molybdopterin guanine dinucleotide) site is built by N802 and K819.

The protein belongs to the prokaryotic molybdopterin-containing oxidoreductase family. NasA/NapA/NarB subfamily. Component of the periplasmic nitrate reductase NapAB complex composed of NapA and NapB. [4Fe-4S] cluster is required as a cofactor. It depends on Mo-bis(molybdopterin guanine dinucleotide) as a cofactor. Predicted to be exported by the Tat system. The position of the signal peptide cleavage has not been experimentally proven.

Its subcellular location is the periplasm. The catalysed reaction is 2 Fe(II)-[cytochrome] + nitrate + 2 H(+) = 2 Fe(III)-[cytochrome] + nitrite + H2O. In terms of biological role, catalytic subunit of the periplasmic nitrate reductase complex NapAB. Receives electrons from NapB and catalyzes the reduction of nitrate to nitrite. The polypeptide is Periplasmic nitrate reductase (Escherichia coli O81 (strain ED1a)).